Here is a 363-residue protein sequence, read N- to C-terminus: Phosphoserine aminotransferase (363 aa).

R42 lines the L-glutamate pocket. Pyridoxal 5'-phosphate-binding positions include 76–77 (GR), W102, T156, D175, and Q198. Residue K199 is modified to N6-(pyridoxal phosphate)lysine. 240–241 (NT) contributes to the pyridoxal 5'-phosphate binding site.

Belongs to the class-V pyridoxal-phosphate-dependent aminotransferase family. SerC subfamily. In terms of assembly, homodimer. The cofactor is pyridoxal 5'-phosphate.

The protein resides in the cytoplasm. The catalysed reaction is O-phospho-L-serine + 2-oxoglutarate = 3-phosphooxypyruvate + L-glutamate. It catalyses the reaction 4-(phosphooxy)-L-threonine + 2-oxoglutarate = (R)-3-hydroxy-2-oxo-4-phosphooxybutanoate + L-glutamate. It participates in amino-acid biosynthesis; L-serine biosynthesis; L-serine from 3-phospho-D-glycerate: step 2/3. The protein operates within cofactor biosynthesis; pyridoxine 5'-phosphate biosynthesis; pyridoxine 5'-phosphate from D-erythrose 4-phosphate: step 3/5. In terms of biological role, catalyzes the reversible conversion of 3-phosphohydroxypyruvate to phosphoserine and of 3-hydroxy-2-oxo-4-phosphonooxybutanoate to phosphohydroxythreonine. The protein is Phosphoserine aminotransferase of Shewanella sp. (strain MR-7).